We begin with the raw amino-acid sequence, 273 residues long: Octanoyl-[GcvH]:protein N-octanoyltransferase (273 aa).

Residues 40 to 245 (ATEGAAIRSW…SLMELGATLT (206 aa)) form the BPL/LPL catalytic domain. Residue Cys-144 is the Acyl-thioester intermediate of the active site.

It belongs to the octanoyltransferase LipL family.

It catalyses the reaction N(6)-octanoyl-L-lysyl-[glycine-cleavage complex H protein] + L-lysyl-[lipoyl-carrier protein] = N(6)-octanoyl-L-lysyl-[lipoyl-carrier protein] + L-lysyl-[glycine-cleavage complex H protein]. The protein operates within protein modification; protein lipoylation via endogenous pathway; protein N(6)-(lipoyl)lysine from octanoyl-[acyl-carrier-protein]. In terms of biological role, catalyzes the amidotransfer (transamidation) of the octanoyl moiety from octanoyl-GcvH to the lipoyl domain of the E2 subunit of lipoate-dependent enzymes. The polypeptide is Octanoyl-[GcvH]:protein N-octanoyltransferase (Exiguobacterium sibiricum (strain DSM 17290 / CCUG 55495 / CIP 109462 / JCM 13490 / 255-15)).